The primary structure comprises 298 residues: Acetylglutamate kinase (298 aa).

Substrate is bound by residues 69–70 (GG), Arg-91, and Asn-196.

The protein belongs to the acetylglutamate kinase family. ArgB subfamily.

The protein resides in the cytoplasm. The catalysed reaction is N-acetyl-L-glutamate + ATP = N-acetyl-L-glutamyl 5-phosphate + ADP. Its pathway is amino-acid biosynthesis; L-arginine biosynthesis; N(2)-acetyl-L-ornithine from L-glutamate: step 2/4. Functionally, catalyzes the ATP-dependent phosphorylation of N-acetyl-L-glutamate. The polypeptide is Acetylglutamate kinase (Rhodopseudomonas palustris (strain ATCC BAA-98 / CGA009)).